The following is a 414-amino-acid chain: Transcriptional repressor protein YY1 (414 aa).

Residues 1-170 (MASGDTLYIA…GGGSSSSGGG (170 aa)) are interaction with the SMAD1/SMAD4 complex. The disordered stretch occupies residues 33-81 (VETIETTVVGEEEEEDDDDEDGGGGDHGGGGGHGHAGHHHHHHHHHHHP). The span at 42–55 (GEEEEEDDDDEDGG) shows a compositional bias: acidic residues. A compositionally biased stretch (gly residues) spans 57–66 (GDHGGGGGHG). A compositionally biased stretch (basic residues) spans 67 to 81 (HAGHHHHHHHHHHHP). Positions 116-260 (DDSDGLRAED…YSEYMTGKKL (145 aa)) are gly-rich region involved in interaction with HCFC1. Ser118 is modified (phosphoserine; by CK2). The segment at 157–203 (GKSGGGGSSSSGGGRVKKGGGKKSGKKSYLSGGAGAAGGGGADPGNK) is disordered. Residues 158–170 (KSGGGGSSSSGGG) are compositionally biased toward gly residues. A compositionally biased stretch (basic residues) spans 171 to 182 (RVKKGGGKKSGK). Glycyl lysine isopeptide (Lys-Gly) (interchain with G-Cter in SUMO2) cross-links involve residues Lys182 and Lys183. Phosphoserine is present on Ser187. Residues 188-199 (GGAGAAGGGGAD) show a composition bias toward gly residues. Residues Lys208 and Lys230 each participate in a glycyl lysine isopeptide (Lys-Gly) (interchain with G-Cter in SUMO2) cross-link. The residue at position 247 (Ser247) is a Phosphoserine. An involved in nuclear matrix association region spans residues 257-341 (GKKLPPGGIP…KAFVESSKLK (85 aa)). Glycyl lysine isopeptide (Lys-Gly) (interchain with G-Cter in SUMO2) cross-links involve residues Lys286 and Lys288. Positions 295 to 414 (TIACPHKGCT…LTHAKAKNNQ (120 aa)) are binding to DNA. 3 C2H2-type zinc fingers span residues 296-320 (IACPHKGCTKMFRDNSAMRKHLHTH), 325-347 (HVCAECGKAFVESSKLKRHQLVH), and 353-377 (FQCTFEGCGKRFSLDFNLRTHVRIH). Zn(2+) contacts are provided by Cys298, Cys303, His316, His320, Cys327, Cys330, His343, His347, Cys355, Cys360, His373, and His377. An involved in repression of activated transcription region spans residues 333-371 (AFVESSKLKRHQLVHTGEKPFQCTFEGCGKRFSLDFNLR). Positions 371–397 (RTHVRIHTGDRPYVCPFDGCNKKFAQS) are involved in masking transactivation domain. Phosphothreonine is present on Thr378. A C2H2-type 4 zinc finger spans residues 383-407 (YVCPFDGCNKKFAQSTNLKSHILTH). Positions 385, 390, 403, and 407 each coordinate Zn(2+). Glycyl lysine isopeptide (Lys-Gly) (interchain with G-Cter in SUMO2) cross-links involve residues Lys409 and Lys411.

It belongs to the YY transcription factor family. Interacts with YAF2 through the region encompassing the first and second zinc fingers. Component of the chromatin remodeling INO80 complex; specifically part of a complex module associated with the DBINO domain of INO80. Interacts with EED and EZH2; the interactions are indicative for an association with the PRC2/EED-EZH2 complex. Interacts with SFMBT2. Found in a complex with SMAD1 and SMAD4. Found in a complex with YY1, SIN3A and HDAC1. Accessory component of the polycomb repressive deubiquitinase (PR-DUB) complex, at least composed of BAP1, one of ASXL1, ASXL2 or (probably) ASXL3 and one of MBD5 or MBD6; the PR-DUB core associates with a number of accessory proteins, including FOXK1, FOXK2, KDM1B, HCFC1, YY1 and OGT. Interacts (via Gly-rich region) with HCFC1; the interaction is direct. Interacts (via C-terminal zinc-finger domains) with BAP1 (via ULD domain); the interaction is direct and requires HCFC1. Post-translationally, phosphorylation at Ser-118 by CK2 prevents proteolytic cleavage by caspase-7 (CASP7) during apoptosis. Proteolytically cleaved by caspase-7 (CASP7) in response to apoptosis. Phosphorylation at Ser-118 protects against proteolytic cleavage. In terms of processing, transiently poly-ADP-ribosylated by PARP1 upon DNA damage, with the effect of decreasing affinity of YY1 to its cognate DNA binding sites. Post-translationally, ubiquitinated.

The protein localises to the nucleus matrix. Multifunctional transcription factor that exhibits positive and negative control on a large number of cellular and viral genes by binding to sites overlapping the transcription start site. Binds to the consensus sequence 5'-CCGCCATNTT-3'; some genes have been shown to contain a longer binding motif allowing enhanced binding; the initial CG dinucleotide can be methylated greatly reducing the binding affinity. The effect on transcription regulation is depending upon the context in which it binds and diverse mechanisms of action include direct activation or repression, indirect activation or repression via cofactor recruitment, or activation or repression by disruption of binding sites or conformational DNA changes. Its activity is regulated by transcription factors and cytoplasmic proteins that have been shown to abrogate or completely inhibit YY1-mediated activation or repression. For example, it acts as a repressor in absence of adenovirus E1A protein but as an activator in its presence. Acts synergistically with the SMAD1 and SMAD4 in bone morphogenetic protein (BMP)-mediated cardiac-specific gene expression. Binds to SMAD binding elements (SBEs) (5'-GTCT/AGAC-3') within BMP response element (BMPRE) of cardiac activating regions. May play an important role in development and differentiation. Proposed to recruit the PRC2/EED-EZH2 complex to target genes that are transcriptional repressed. Involved in DNA repair. In vitro, binds to DNA recombination intermediate structures (Holliday junctions). Plays a role in regulating enhancer activation. Recruits the PR-DUB complex to specific gene-regulatory regions. Functionally, proposed core component of the chromatin remodeling INO80 complex which is involved in transcriptional regulation, DNA replication and probably DNA repair; proposed to target the INO80 complex to YY1-responsive elements. The polypeptide is Transcriptional repressor protein YY1 (YY1) (Homo sapiens (Human)).